Consider the following 310-residue polypeptide: p-hydroxybenzoic acid efflux pump subunit AaeA (310 aa).

A helical transmembrane segment spans residues 12–32 (AITVVLVILAFIAIFNAWVYY).

It belongs to the membrane fusion protein (MFP) (TC 8.A.1) family.

It localises to the cell inner membrane. Its function is as follows. Forms an efflux pump with AaeB. The protein is p-hydroxybenzoic acid efflux pump subunit AaeA of Escherichia coli O8 (strain IAI1).